The sequence spans 473 residues: Hyaluronidase-2 (473 aa).

The signal sequence occupies residues 1–20 (MRAGPGPTVTLALVLAVSWA). Intrachain disulfides connect C47-C340 and C211-C227. N-linked (GlcNAc...) asparagine glycosylation is found at N74 and N103. The Proton donor role is filled by E135. N357 carries an N-linked (GlcNAc...) asparagine glycan. The EGF-like domain maps to 361–439 (ATQYCSRAQC…YLGWSGEQCQ (79 aa)). Cystine bridges form between C365-C376, C370-C427, and C429-C438. G448 is lipidated: GPI-anchor amidated glycine. A propeptide spans 449–473 (ASEAWAGSHLTSLLALAALAFTWTL) (removed in mature form).

This sequence belongs to the glycosyl hydrolase 56 family. As to quaternary structure, interacts with MST1R. In terms of tissue distribution, widely expressed (at protein level).

The protein localises to the cell membrane. The catalysed reaction is Random hydrolysis of (1-&gt;4)-linkages between N-acetyl-beta-D-glucosamine and D-glucuronate residues in hyaluronate.. Catalyzes hyaluronan degradation into small fragments that are endocytosed and degraded in lysosomes by HYAL1 and exoglycosidases. Essential for the breakdown of extracellular matrix hyaluronan. The polypeptide is Hyaluronidase-2 (HYAL2) (Homo sapiens (Human)).